The sequence spans 872 residues: Sine oculis-binding protein homolog (872 aa).

Residues 1–14 (MAEMEKEGRPPENK) are compositionally biased toward basic and acidic residues. The disordered stretch occupies residues 1–26 (MAEMEKEGRPPENKRSRKPAHPVKRE). FCS-type zinc fingers lie at residues 142-180 (DDVS…KCFA) and 216-256 (FKNN…KCLN). 3 disordered regions span residues 308–354 (RRKA…KSMP), 411–484 (FIRG…PGAP), and 550–619 (KPPN…GRSE). Residues 319 to 344 (GQSQGPGPSASTTVSPSDTANCSVTK) are compositionally biased toward polar residues. The segment covering 417-433 (HHASNPNSPLSNPMLPG) has biased composition (low complexity). Residues 460 to 484 (IHPPSTPTMPGNPPGLLPPPPPGAP) are compositionally biased toward pro residues. The SUMO interaction motif 1 (SIM); mediates the binding to polysumoylated substrates motif lies at 620-624 (VVDLT). Serine 629 is subject to Phosphoserine. The SUMO interaction motif 2 (SIM); mediates the binding to polysumoylated substrates motif lies at 651-655 (VIDLT). Lysine 675 participates in a covalent cross-link: Glycyl lysine isopeptide (Lys-Gly) (interchain with G-Cter in SUMO2). Serine 697 carries the phosphoserine modification. Residues 728–770 (AAEGAKGAEPPPEQPPPPPPPPPAPPKKLLSPEEPAVSELESV) are disordered. The span at 736–753 (EPPPEQPPPPPPPPPAPP) shows a compositional bias: pro residues.

Belongs to the SOBP family. Interacts (via SIM domains) with SUMO1 and SUMO2.

Functionally, implicated in development of the cochlea. The polypeptide is Sine oculis-binding protein homolog (Bos taurus (Bovine)).